The following is a 260-amino-acid chain: 3-dehydroquinate dehydratase (260 aa).

Residues 50–52 (EWR) and arginine 86 contribute to the 3-dehydroquinate site. The active-site Proton donor/acceptor is the histidine 148. Lysine 175 functions as the Schiff-base intermediate with substrate in the catalytic mechanism. Arginine 217, serine 236, and glutamine 240 together coordinate 3-dehydroquinate.

The protein belongs to the type-I 3-dehydroquinase family. As to quaternary structure, homodimer.

It catalyses the reaction 3-dehydroquinate = 3-dehydroshikimate + H2O. It functions in the pathway metabolic intermediate biosynthesis; chorismate biosynthesis; chorismate from D-erythrose 4-phosphate and phosphoenolpyruvate: step 3/7. In terms of biological role, involved in the third step of the chorismate pathway, which leads to the biosynthesis of aromatic amino acids. Catalyzes the cis-dehydration of 3-dehydroquinate (DHQ) and introduces the first double bond of the aromatic ring to yield 3-dehydroshikimate. The sequence is that of 3-dehydroquinate dehydratase from Aromatoleum aromaticum (strain DSM 19018 / LMG 30748 / EbN1) (Azoarcus sp. (strain EbN1)).